Reading from the N-terminus, the 250-residue chain is Thioesterase FPSE_09186 (250 aa).

It belongs to the AMT4 thioesterase family.

It participates in secondary metabolite biosynthesis. Its function is as follows. Thioesterase; part of the gene cluster that mediates the biosynthesis of the lipopeptides W493 A and B. W493 A and B consist of six amino acid residues D-allo-thr, L-Ala, D-Ala, L-Gln, D-Tyr, and L-Val/L-Ile linked to a 3-hydroxy-4-methyltetradecanoic acid polyketide chain. The biosynthesis starts with formation of the linear polyketide chain by the highly reducing polyketide synthase PKS40. The gene cluster contains a putative acyl-CoA ligase (FPSE_09184) for formation of a CoA thioester polyketide. The thiol bond could be hydrolyzed by the putative thioesterase (FPSE_09186) and then accepted by the first T domain in module 1 of NRPS32. The second T domain is responsible for accepting a threonine, which is adenylated by the A domain and epimerized to the D-allo-threonine formed by the E domain. The five successive modules incorporate Ala, Ala, Gln, Tyr, and Val/Ile into the final product, which is released by cyclization. This is Thioesterase FPSE_09186 from Fusarium pseudograminearum (strain CS3096) (Wheat and barley crown-rot fungus).